A 207-amino-acid polypeptide reads, in one-letter code: Thiamine-phosphate synthase (207 aa).

Residues 36-40 (QLRIK) and D68 contribute to the 4-amino-2-methyl-5-(diphosphooxymethyl)pyrimidine site. Mg(2+)-binding residues include D69 and D88. Residue S106 participates in 4-amino-2-methyl-5-(diphosphooxymethyl)pyrimidine binding. Residue 132–134 (TQT) coordinates 2-[(2R,5Z)-2-carboxy-4-methylthiazol-5(2H)-ylidene]ethyl phosphate. 4-amino-2-methyl-5-(diphosphooxymethyl)pyrimidine is bound at residue K135. Residues G162 and 182–183 (VS) each bind 2-[(2R,5Z)-2-carboxy-4-methylthiazol-5(2H)-ylidene]ethyl phosphate.

Belongs to the thiamine-phosphate synthase family. Mg(2+) is required as a cofactor.

The catalysed reaction is 2-[(2R,5Z)-2-carboxy-4-methylthiazol-5(2H)-ylidene]ethyl phosphate + 4-amino-2-methyl-5-(diphosphooxymethyl)pyrimidine + 2 H(+) = thiamine phosphate + CO2 + diphosphate. It carries out the reaction 2-(2-carboxy-4-methylthiazol-5-yl)ethyl phosphate + 4-amino-2-methyl-5-(diphosphooxymethyl)pyrimidine + 2 H(+) = thiamine phosphate + CO2 + diphosphate. It catalyses the reaction 4-methyl-5-(2-phosphooxyethyl)-thiazole + 4-amino-2-methyl-5-(diphosphooxymethyl)pyrimidine + H(+) = thiamine phosphate + diphosphate. Its pathway is cofactor biosynthesis; thiamine diphosphate biosynthesis; thiamine phosphate from 4-amino-2-methyl-5-diphosphomethylpyrimidine and 4-methyl-5-(2-phosphoethyl)-thiazole: step 1/1. Condenses 4-methyl-5-(beta-hydroxyethyl)thiazole monophosphate (THZ-P) and 2-methyl-4-amino-5-hydroxymethyl pyrimidine pyrophosphate (HMP-PP) to form thiamine monophosphate (TMP). The polypeptide is Thiamine-phosphate synthase (Pyrococcus horikoshii (strain ATCC 700860 / DSM 12428 / JCM 9974 / NBRC 100139 / OT-3)).